Reading from the N-terminus, the 325-residue chain is Phenylalanine--tRNA ligase alpha subunit (325 aa).

E251 is a binding site for Mg(2+).

This sequence belongs to the class-II aminoacyl-tRNA synthetase family. Phe-tRNA synthetase alpha subunit type 1 subfamily. Tetramer of two alpha and two beta subunits. Requires Mg(2+) as cofactor.

It is found in the cytoplasm. It catalyses the reaction tRNA(Phe) + L-phenylalanine + ATP = L-phenylalanyl-tRNA(Phe) + AMP + diphosphate + H(+). In Thermotoga maritima (strain ATCC 43589 / DSM 3109 / JCM 10099 / NBRC 100826 / MSB8), this protein is Phenylalanine--tRNA ligase alpha subunit (pheS).